A 105-amino-acid chain; its full sequence is UPF0145 protein Sala_0338 (105 aa).

The protein belongs to the UPF0145 family.

In Sphingopyxis alaskensis (strain DSM 13593 / LMG 18877 / RB2256) (Sphingomonas alaskensis), this protein is UPF0145 protein Sala_0338.